A 185-amino-acid polypeptide reads, in one-letter code: Elongation factor P (185 aa).

This sequence belongs to the elongation factor P family.

It is found in the cytoplasm. It functions in the pathway protein biosynthesis; polypeptide chain elongation. Its function is as follows. Involved in peptide bond synthesis. Stimulates efficient translation and peptide-bond synthesis on native or reconstituted 70S ribosomes in vitro. Probably functions indirectly by altering the affinity of the ribosome for aminoacyl-tRNA, thus increasing their reactivity as acceptors for peptidyl transferase. This Acetivibrio thermocellus (strain ATCC 27405 / DSM 1237 / JCM 9322 / NBRC 103400 / NCIMB 10682 / NRRL B-4536 / VPI 7372) (Clostridium thermocellum) protein is Elongation factor P.